We begin with the raw amino-acid sequence, 491 residues long: MNAAAEAEFNILLATDSYKVTHYKQYPPNTSKVYSYFECREKKTENSKVRKVKYEETVFYGLQYILNKYLKGKVVTKEKIQEAKEVYREHFQDDVFNERGWNYILEKYDGHLPIEVKAVPEGSVIPRGNVLFTVENTDPECYWLTNWIETILVQSWYPITVATNSREQKKILAKYLLETSGNLDGLEYKLHDFGYRGVSSQETAGIGASAHLVNFKGTDTVAGIALIKKYYGTKDPVPGYSVPAAEHSTITAWGKDHEKDAFEHIVTQFSSVPVSVVSDSYDIYNACEKIWGEDLRHLIVSRSTEAPLIIRPDSGNPLDTVLKVLDILGKKFPVSENSKGYKLLPPYLRVIQGDGVDINTLQEIVEGMKQKKWSIENVSFGSGGALLQKLTRDLLNCSFKCSYVVTNGLGVNVFKDPVADPNKRSKKGRLSLHRTPAGTFVTLEEGKGDLEEYGHDLLHTVFKNGKVTKSYSFDEVRKNAQLNMEQDVAPH.

N-acetylmethionine is present on M1. Residue Y188 is modified to Phosphotyrosine. Diphosphate is bound at residue R196. D219 contributes to the beta-nicotinamide D-ribonucleotide binding site. The diphosphate site is built by H247 and R311. Residues 311–313 (RPD), 353–354 (GD), G384, and R392 contribute to the beta-nicotinamide D-ribonucleotide site. S472 bears the Phosphoserine mark.

Belongs to the NAPRTase family. Homodimer. In terms of tissue distribution, expressed in various tissues. At the highest level in liver and at the second highest in heart. The amount is higher in heart than in lung.

It localises to the nucleus. It is found in the cytoplasm. The protein localises to the secreted. It catalyses the reaction beta-nicotinamide D-ribonucleotide + diphosphate = 5-phospho-alpha-D-ribose 1-diphosphate + nicotinamide + H(+). The protein operates within cofactor biosynthesis; NAD(+) biosynthesis; nicotinamide D-ribonucleotide from 5-phospho-alpha-D-ribose 1-diphosphate and nicotinamide: step 1/1. Functionally, catalyzes the condensation of nicotinamide with 5-phosphoribosyl-1-pyrophosphate to yield nicotinamide mononucleotide, an intermediate in the biosynthesis of NAD. It is the rate limiting component in the mammalian NAD biosynthesis pathway. The secreted form behaves both as a cytokine with immunomodulating properties and an adipokine with anti-diabetic properties, it has no enzymatic activity, partly because of lack of activation by ATP, which has a low level in extracellular space and plasma. Plays a role in the modulation of circadian clock function. NAMPT-dependent oscillatory production of NAD regulates oscillation of clock target gene expression by releasing the core clock component: CLOCK-BMAL1 heterodimer from NAD-dependent SIRT1-mediated suppression. The protein is Nicotinamide phosphoribosyltransferase (Nampt) of Rattus norvegicus (Rat).